Reading from the N-terminus, the 212-residue chain is Regulatory protein RecX (212 aa).

The protein belongs to the RecX family.

It is found in the cytoplasm. In terms of biological role, modulates RecA activity. This Clostridium botulinum (strain Eklund 17B / Type B) protein is Regulatory protein RecX.